We begin with the raw amino-acid sequence, 135 residues long: Endoribonuclease YbeY (135 aa).

Residues H102, H106, and H112 each coordinate Zn(2+).

Belongs to the endoribonuclease YbeY family. Zn(2+) is required as a cofactor.

It is found in the cytoplasm. Functionally, single strand-specific metallo-endoribonuclease involved in late-stage 70S ribosome quality control and in maturation of the 3' terminus of the 16S rRNA. This Rubrobacter xylanophilus (strain DSM 9941 / JCM 11954 / NBRC 16129 / PRD-1) protein is Endoribonuclease YbeY.